The sequence spans 229 residues: MAMSSGTLRISATLVSPYHHHHRNRLSLPSSSSKVDFTGFISNGVNSLETQKCTPGLAISRENTRGQVKVLARNTGDYELSPSPAEQEIESFLYNAINMGFFDRLNLAWKIIFPSHASRRSSNARIAKQRLKMILFSDRCDVSDEAKRKIVNNIIHALSDFVEIESEEKVQLNVSTDGDLGTIYSVTVPVRRVKPEYQDVDEAGTITNVEYKDTRDGSVDVRFDFYVPE.

Residues 1–30 (MAMSSGTLRISATLVSPYHHHHRNRLSLPS) constitute a chloroplast transit peptide. The tract at residues 35–141 (VDFTGFISNG…KMILFSDRCD (107 aa)) is interaction with MIND1. The homodimerization stretch occupies residues 142 to 169 (VSDEAKRKIVNNIIHALSDFVEIESEEK).

Belongs to the MinE family. In terms of assembly, homodimer. Interacts with MIND1. These interactions are required for proper intraplastidic localization. Binds to ARC3. Expressed in green tissues, especially at the shoot apex. Also present in leaves, stems, buds, and flowers, especially in sepals, siliques (tip and base), and anthers (mostly in pollen grains).

The protein resides in the plastid. Its subcellular location is the chloroplast. Acts as a topological specificity factor during plastid division and specify plastid constriction sites (such as the Z-ring) in a MCD1-dependent manner. Especially involved in epidermal plastids division in a FTSZ1-dependent manner. Required for the proper formation of FtsZ rings at the division site in nongreen plastids (e.g. etioplasts). May contribute to gravitropism in stems and hypocotyls. Stimulates MIND1 ATPase activity. In cooperation with MIND1, prevents FtsZ ring formation anywhere outside of the mid-plastids. This Arabidopsis thaliana (Mouse-ear cress) protein is Cell division topological specificity factor homolog, chloroplastic.